Here is a 142-residue protein sequence, read N- to C-terminus: Hemoglobin subunit alpha (142 aa).

Positions 2 to 142 (VLSAADKTNV…VSTVLTSKYR (141 aa)) constitute a Globin domain. At Ser4 the chain carries Phosphoserine. At Lys8 the chain carries N6-succinyllysine. Thr9 bears the Phosphothreonine mark. Lys12 carries the N6-succinyllysine modification. Lys17 carries the post-translational modification N6-acetyllysine; alternate. At Lys17 the chain carries N6-succinyllysine; alternate. An N6-succinyllysine modification is found at Lys41. At Ser50 the chain carries Phosphoserine. His59 lines the O2 pocket. His88 provides a ligand contact to heme b. Ser103 carries the phosphoserine modification. Phosphothreonine is present on Thr109. A Phosphoserine modification is found at Ser125. Phosphothreonine occurs at positions 135 and 138. The residue at position 139 (Ser139) is a Phosphoserine.

This sequence belongs to the globin family. In terms of assembly, heterotetramer of two alpha chains and two beta chains. In terms of tissue distribution, red blood cells.

In terms of biological role, involved in oxygen transport from the lung to the various peripheral tissues. Functionally, hemopressin acts as an antagonist peptide of the cannabinoid receptor CNR1. Hemopressin-binding efficiently blocks cannabinoid receptor CNR1 and subsequent signaling. This chain is Hemoglobin subunit alpha (HBA), found in Equus zebra (Mountain zebra).